The chain runs to 59 residues: Large ribosomal subunit protein uL30 (59 aa).

Belongs to the universal ribosomal protein uL30 family. As to quaternary structure, part of the 50S ribosomal subunit.

In Escherichia coli (strain UTI89 / UPEC), this protein is Large ribosomal subunit protein uL30.